The following is a 616-amino-acid chain: Dihydroxy-acid dehydratase (616 aa).

Position 81 (aspartate 81) interacts with Mg(2+). Cysteine 122 serves as a coordination point for [2Fe-2S] cluster. Mg(2+) contacts are provided by aspartate 123 and lysine 124. Position 124 is an N6-carboxylysine (lysine 124). Cysteine 195 lines the [2Fe-2S] cluster pocket. Glutamate 491 is a binding site for Mg(2+). Serine 517 acts as the Proton acceptor in catalysis.

Belongs to the IlvD/Edd family. In terms of assembly, homodimer. Requires [2Fe-2S] cluster as cofactor. It depends on Mg(2+) as a cofactor.

The enzyme catalyses (2R)-2,3-dihydroxy-3-methylbutanoate = 3-methyl-2-oxobutanoate + H2O. It catalyses the reaction (2R,3R)-2,3-dihydroxy-3-methylpentanoate = (S)-3-methyl-2-oxopentanoate + H2O. It functions in the pathway amino-acid biosynthesis; L-isoleucine biosynthesis; L-isoleucine from 2-oxobutanoate: step 3/4. It participates in amino-acid biosynthesis; L-valine biosynthesis; L-valine from pyruvate: step 3/4. Functions in the biosynthesis of branched-chain amino acids. Catalyzes the dehydration of (2R,3R)-2,3-dihydroxy-3-methylpentanoate (2,3-dihydroxy-3-methylvalerate) into 2-oxo-3-methylpentanoate (2-oxo-3-methylvalerate) and of (2R)-2,3-dihydroxy-3-methylbutanoate (2,3-dihydroxyisovalerate) into 2-oxo-3-methylbutanoate (2-oxoisovalerate), the penultimate precursor to L-isoleucine and L-valine, respectively. The polypeptide is Dihydroxy-acid dehydratase (Salmonella dublin (strain CT_02021853)).